We begin with the raw amino-acid sequence, 157 residues long: Ribosomal RNA large subunit methyltransferase H (157 aa).

S-adenosyl-L-methionine-binding positions include L73, G105, and 124-129 (MSKMTF).

This sequence belongs to the RNA methyltransferase RlmH family. As to quaternary structure, homodimer.

The protein localises to the cytoplasm. The catalysed reaction is pseudouridine(1915) in 23S rRNA + S-adenosyl-L-methionine = N(3)-methylpseudouridine(1915) in 23S rRNA + S-adenosyl-L-homocysteine + H(+). In terms of biological role, specifically methylates the pseudouridine at position 1915 (m3Psi1915) in 23S rRNA. In Bacteroides thetaiotaomicron (strain ATCC 29148 / DSM 2079 / JCM 5827 / CCUG 10774 / NCTC 10582 / VPI-5482 / E50), this protein is Ribosomal RNA large subunit methyltransferase H.